We begin with the raw amino-acid sequence, 170 residues long: Cathelicidin antimicrobial peptide (170 aa).

Positions 1–30 (MKTQRDGPSLGRWSLLLLLLGLTMPLAVIG) are cleaved as a signal peptide. Positions 31 to 131 (RVLSYQEAVL…DISCDKDKRK (101 aa)) are cleaved as a propeptide — cathelin-like domain (CLD). Residues 31-131 (RVLSYQEAVL…DISCDKDKRK (101 aa)) form a cathelin-like domain (CLD) region. Intrachain disulfides connect cysteine 86–cysteine 97 and cysteine 108–cysteine 125. The interval 150-162 (LKKIGQKIKDFFG) is active core.

The protein belongs to the cathelicidin family. As to quaternary structure, monomer, homodimer or homotrimer (in vitro). Oligomerizes as tetra- or hexamer in solution (in vitro). In terms of processing, proteolytically cleaved by proteinase PRTN3 into antibacterial peptide LL-37. Proteolytically cleaved by cathepsin CTSG and neutrophil elastase ELANE. Resistant to proteolytic degradation in solution, and when bound to both zwitterionic (mimicking mammalian membranes) and negatively charged membranes (mimicking bacterial membranes). Post-translationally, after secretion onto the skin surface, the CAMP gene product is processed by a serine protease-dependent mechanism into multiple novel antimicrobial peptides distinct from and shorter than cathelicidin LL-37. These peptides show enhanced antimicrobial action, acquiring the ability to kill skin pathogens such as S.aureus, E.coli and C.albicans. These peptides have lost the ability to stimulate CXCL8/IL8 release from keratinocytes. The peptides act synergistically, killing bacteria at lower concentrations when present together, and maintain activity at increased salt condition.

It is found in the secreted. The protein resides in the vesicle. Functionally, antimicrobial protein that is an integral component of the innate immune system. Binds to bacterial lipopolysaccharides (LPS). Acts via neutrophil N-formyl peptide receptors to enhance the release of CXCL2. Postsecretory processing generates multiple cathelicidin antimicrobial peptides with various lengths which act as a topical antimicrobial defense in sweat on skin. The unprocessed precursor form, cathelicidin antimicrobial peptide, inhibits the growth of Gram-negative E.coli and E.aerogenes with efficiencies comparable to that of the mature peptide LL-37 (in vitro). In terms of biological role, antimicrobial peptide that is an integral component of the innate immune system. Binds to bacterial lipopolysaccharides (LPS). Causes membrane permeabilization by forming transmembrane pores (in vitro). Causes lysis of E.coli. Exhibits antimicrobial activity against Gram-negative bacteria such as P.aeruginosa, S.typhimurium, E.aerogenes, E.coli and P.syringae, Gram-positive bacteria such as L.monocytogenes, S.epidermidis, S.pyogenes and S.aureus, as well as vancomycin-resistant enterococci (in vitro). Exhibits antimicrobial activity against methicillin-resistant S.aureus, P.mirabilis, and C.albicans in low-salt media, but not in media containing 100 mM NaCl (in vitro). Forms chiral supramolecular assemblies with quinolone signal (PQS) molecules of P.aeruginosa, which may lead to interference of bacterial quorum signaling and perturbance of bacterial biofilm formation. May form supramolecular fiber-like assemblies on bacterial membranes. Induces cytokine and chemokine producation as well as TNF/TNFA and CSF2/GMCSF production in normal human keratinocytes. Exhibits hemolytic activity against red blood cells. Its function is as follows. Exhibits antimicrobial activity against E.coli and B.megaterium (in vitro). The chain is Cathelicidin antimicrobial peptide from Saguinus oedipus (Cotton-top tamarin).